The chain runs to 397 residues: MPRALKILVIGMFINVTGASFLWPLNTIYIHNHLGKSLTVAGLVLMLNSGASVAGNLCGGFLFDKIGGFKSIMLGIAITLASLMGLVFFHDWPAYIVLLTIVGFGSGVVFPASYAMAGSVWPEGGRKAFNAIYVAQNAGVAVGSALGGVVASFSFSYVFLANAVLYLIFFFIVYFGFRNIQTGDASQTSVLDYDAVNSKAKFAALIILSGGYVLGWLAYSQWSTTIASYTQSIGISLSLYSVLWTVNGILIVLGQPLVSFVVKKWAESLKAQMVIGFIIFIVSFSMLLTAKQFPMFLAAMVILTIGEMLVWPAVPTIANQLAPKGKEGFYQGFVNSAATGGRMIGPLFGGVLVDHYGIRALVLSLLVLLLISIATTLLYDKRIKSAKETNKQASISS.

The next 12 helical transmembrane spans lie at 5-25, 43-63, 69-89, 92-112, 131-151, 157-177, 202-222, 233-253, 269-289, 293-313, 333-353, and 360-380; these read LKIL…LWPL, LVLM…GFLF, FKSI…LVFF, WPAY…VFPA, AIYV…GVVA, YVFL…YFGF, FAAL…YSQW, IGIS…LIVL, LKAQ…MLLT, FPMF…VWPA, FVNS…GVLV, and ALVL…LLYD.

It belongs to the major facilitator superfamily.

It is found in the cell membrane. This is an uncharacterized protein from Bacillus subtilis (strain 168).